The primary structure comprises 200 residues: GTP cyclohydrolase-2 (200 aa).

49–53 provides a ligand contact to GTP; sequence RVHSE. Zn(2+) is bound by residues C54, C65, and C67. Residues Q70, 92-94, and T114 each bind GTP; that span reads EGR. D126 functions as the Proton acceptor in the catalytic mechanism. R128 acts as the Nucleophile in catalysis. GTP contacts are provided by T149 and K154.

It belongs to the GTP cyclohydrolase II family. In terms of assembly, homodimer. Requires Zn(2+) as cofactor.

The catalysed reaction is GTP + 4 H2O = 2,5-diamino-6-hydroxy-4-(5-phosphoribosylamino)-pyrimidine + formate + 2 phosphate + 3 H(+). The protein operates within cofactor biosynthesis; riboflavin biosynthesis; 5-amino-6-(D-ribitylamino)uracil from GTP: step 1/4. Its function is as follows. Catalyzes the conversion of GTP to 2,5-diamino-6-ribosylamino-4(3H)-pyrimidinone 5'-phosphate (DARP), formate and pyrophosphate. This is GTP cyclohydrolase-2 from Klebsiella pneumoniae (strain 342).